A 379-amino-acid polypeptide reads, in one-letter code: Cytochrome b (379 aa).

Helical transmembrane passes span 34 to 54 (FGSL…LLAM), 78 to 99 (WLIR…YLHI), 114 to 134 (WNTG…GYVL), and 179 to 199 (FFAL…IHLT). Heme b contacts are provided by H84 and H98. H183 and H197 together coordinate heme b. An a ubiquinone-binding site is contributed by H202. Helical transmembrane passes span 227-247 (LKDI…AFFS), 289-309 (LGGV…PFLH), 321-341 (LSQM…WIGS), and 348-368 (FIII…ILFP).

Belongs to the cytochrome b family. In terms of assembly, the cytochrome bc1 complex contains 11 subunits: 3 respiratory subunits (MT-CYB, CYC1 and UQCRFS1), 2 core proteins (UQCRC1 and UQCRC2) and 6 low-molecular weight proteins (UQCRH/QCR6, UQCRB/QCR7, UQCRQ/QCR8, UQCR10/QCR9, UQCR11/QCR10 and a cleavage product of UQCRFS1). This cytochrome bc1 complex then forms a dimer. Heme b is required as a cofactor.

It localises to the mitochondrion inner membrane. Component of the ubiquinol-cytochrome c reductase complex (complex III or cytochrome b-c1 complex) that is part of the mitochondrial respiratory chain. The b-c1 complex mediates electron transfer from ubiquinol to cytochrome c. Contributes to the generation of a proton gradient across the mitochondrial membrane that is then used for ATP synthesis. In Dromaius novaehollandiae (Emu), this protein is Cytochrome b (MT-CYB).